The sequence spans 192 residues: MISEVVVTTRKNNRDNKAPIGVYFKDKKVIMHLFSGSHTYENLLTEDYFSVNVVPPIEIAKAVLDDEDDYLYYNDIPYLKSSYYAIFYKVIERKFVDREDKFGKNRLMILEGEEIKRIYLNNIPKPYNRADGLLVEIAVIYSRLANKNIKINEDDKKEMINDIRKYFSIIKKVGGREHKQLAEIMLRNLNLL.

To M.thermoautotrophicum MTH863.

This is an uncharacterized protein from Methanocaldococcus jannaschii (strain ATCC 43067 / DSM 2661 / JAL-1 / JCM 10045 / NBRC 100440) (Methanococcus jannaschii).